Consider the following 151-residue polypeptide: Lectin-like protein BA14k (151 aa).

A signal peptide spans 1-26; the sequence is MNIFKQTCVGAFAVIFGATSIAPTMA. Residues 83-103 form a helical membrane-spanning segment; sequence GWWYPLAAFGAGAIIGGAVSQ.

It belongs to the BA14k family.

The protein resides in the cell membrane. In terms of biological role, has immunoglobulin-binding and hemagglutination properties, and can bind to mannose. Essential for virulence. May be involved in LPS biosynthesis or polysaccharide transport. In Brucella anthropi (strain ATCC 49188 / DSM 6882 / CCUG 24695 / JCM 21032 / LMG 3331 / NBRC 15819 / NCTC 12168 / Alc 37) (Ochrobactrum anthropi), this protein is Lectin-like protein BA14k.